The following is a 183-amino-acid chain: MIIPKKNRNEICKYLFQEGVLYAKKDYNLAKHPQIDVPNLQVIKLMQSFKSKEYVRETFSWQYYYWYLTNDGIEHLRNYLNLPSEIVPATLKKSARPPGRPFGSGPPGDRPRGPPRFEGDRPRFGDRDGYRGGPRGAPGDFGGEKGGAPAEFQPSFRSSGGRPGFGRGGGGGFGAGPTSSSME.

Positions 91–183 are disordered; that stretch reads LKKSARPPGR…GAGPTSSSME (93 aa). The span at 109 to 130 shows a compositional bias: basic and acidic residues; that stretch reads DRPRGPPRFEGDRPRFGDRDGY. Composition is skewed to gly residues over residues 131-146 and 161-175; these read RGGP…GEKG and GRPG…GFGA.

Belongs to the eukaryotic ribosomal protein eS10 family.

It localises to the cytoplasm. The protein is Small ribosomal subunit protein eS10z of Oryza sativa subsp. japonica (Rice).